Here is a 100-residue protein sequence, read N- to C-terminus: NADH-quinone oxidoreductase subunit K (100 aa).

A run of 3 helical transmembrane segments spans residues 1 to 21 (MIGL…GLAG), 28 to 48 (ILLL…GFVA), and 64 to 84 (FIIA…ILWF).

The protein belongs to the complex I subunit 4L family. NDH-1 is composed of 14 different subunits. Subunits NuoA, H, J, K, L, M, N constitute the membrane sector of the complex.

The protein localises to the cell inner membrane. The enzyme catalyses a quinone + NADH + 5 H(+)(in) = a quinol + NAD(+) + 4 H(+)(out). NDH-1 shuttles electrons from NADH, via FMN and iron-sulfur (Fe-S) centers, to quinones in the respiratory chain. The immediate electron acceptor for the enzyme in this species is believed to be ubiquinone. Couples the redox reaction to proton translocation (for every two electrons transferred, four hydrogen ions are translocated across the cytoplasmic membrane), and thus conserves the redox energy in a proton gradient. The protein is NADH-quinone oxidoreductase subunit K of Helicobacter pylori (strain P12).